The sequence spans 490 residues: Monocarboxylate transporter 3 (490 aa).

The Cytoplasmic segment spans residues 1–14 (MGAGGPRRGAGPPD). The chain crosses the membrane as a helical span at residues 15–35 (GGWGWVVLGACFVITGFAYGF). Residues 36–58 (PKAVSVFFRELKRDFGAGYSDTA) are Extracellular-facing. A helical transmembrane segment spans residues 59-79 (WVSSIMLAMLYGTGPLSSILV). Over 80–85 (TRFGCR) the chain is Cytoplasmic. The chain crosses the membrane as a helical span at residues 86 to 106 (PVMLAGGLLASAGMILASFAS). Residues 107 to 115 (RLLELYLTA) lie on the Extracellular side of the membrane. A helical membrane pass occupies residues 116-136 (GVLTGLGLALNFQPSLIMLGL). The Cytoplasmic portion of the chain corresponds to 137 to 147 (YFERRRPLANG). The chain crosses the membrane as a helical span at residues 148-168 (LAAAGSPVFLSTLSPLGQLLG). Topologically, residues 169–172 (ERFG) are extracellular. The helical transmembrane segment at 173 to 193 (WRGGFLLFGGLLLHCCACGAV) threads the bilayer. Residues 194–230 (MRPPPGPQPRPDPAPPGGRARHRQLLDLAVCTDRTFM) lie on the Cytoplasmic side of the membrane. Residues 231–251 (VYMVTKFLMALGLFVPAILLV) traverse the membrane as a helical segment. Residues 252 to 257 (NYAKDA) lie on the Extracellular side of the membrane. A helical transmembrane segment spans residues 258–278 (GVPDAEAAFLLSIVGFVDIVA). Residues 279–293 (RPACGALAGLGRLRP) lie on the Cytoplasmic side of the membrane. Residues 294 to 314 (HVPYLFSLALLANGLTDLISA) form a helical membrane-spanning segment. Residues 315-318 (RARS) are Extracellular-facing. The chain crosses the membrane as a helical span at residues 319 to 339 (YGTLVAFCIAFGLSYGMVGAL). The Cytoplasmic segment spans residues 340–352 (QFEVLMATVGAPR). The helical transmembrane segment at 353 to 373 (FPSALGLVLLVEAVAVLIGPP) threads the bilayer. Residues 374–386 (SAGRLVDALKNYE) are Extracellular-facing. Residues 387 to 407 (IIFYLAGSEVVLAGVFMAVTT) traverse the membrane as a helical segment. Residues 408 to 490 (YCCQRCSKDI…GGHEAHGQNA (83 aa)) are Cytoplasmic-facing. Positions 419–490 (PGPSAEGGTS…GGHEAHGQNA (72 aa)) are disordered. 2 basolateral sorting signal regions span residues 426–460 (GTSDTEDVEAERDSEPMPASTEEPGSLEALEVLSP) and 461–480 (RAGSPEPEEEAVPDLSHESV). Residues 475-490 (LSHESVGGHEAHGQNA) are compositionally biased toward basic and acidic residues.

This sequence belongs to the major facilitator superfamily. Monocarboxylate porter (TC 2.A.1.13) family. As to expression, retinal pigment epithelium.

It is found in the basolateral cell membrane. It catalyses the reaction (S)-lactate(in) + H(+)(in) = (S)-lactate(out) + H(+)(out). In terms of biological role, probable retinal pigment epithelium (RPE)-specific proton-coupled L-lactate transporter. May facilitate transport of lactate and H(+) out of the retina and could therefore play a role in pH and ion homeostasis of the outer retina. The sequence is that of Monocarboxylate transporter 3 (Slc16a8) from Rattus norvegicus (Rat).